A 306-amino-acid chain; its full sequence is ATP synthase gamma chain (306 aa).

The protein belongs to the ATPase gamma chain family. As to quaternary structure, F-type ATPases have 2 components, CF(1) - the catalytic core - and CF(0) - the membrane proton channel. CF(1) has five subunits: alpha(3), beta(3), gamma(1), delta(1), epsilon(1). CF(0) has three main subunits: a, b and c.

It localises to the cell membrane. Its function is as follows. Produces ATP from ADP in the presence of a proton gradient across the membrane. The gamma chain is believed to be important in regulating ATPase activity and the flow of protons through the CF(0) complex. The chain is ATP synthase gamma chain from Bifidobacterium animalis subsp. lactis (strain AD011).